We begin with the raw amino-acid sequence, 364 residues long: Ribosomal RNA large subunit methyltransferase M (364 aa).

Residues Ser-187, Cys-220–Gly-223, Asp-239, Asp-259, and Asp-276 each bind S-adenosyl-L-methionine. Lys-305 (proton acceptor) is an active-site residue.

Belongs to the class I-like SAM-binding methyltransferase superfamily. RNA methyltransferase RlmE family. RlmM subfamily. In terms of assembly, monomer.

The protein localises to the cytoplasm. The enzyme catalyses cytidine(2498) in 23S rRNA + S-adenosyl-L-methionine = 2'-O-methylcytidine(2498) in 23S rRNA + S-adenosyl-L-homocysteine + H(+). Functionally, catalyzes the 2'-O-methylation at nucleotide C2498 in 23S rRNA. The polypeptide is Ribosomal RNA large subunit methyltransferase M (Aeromonas hydrophila subsp. hydrophila (strain ATCC 7966 / DSM 30187 / BCRC 13018 / CCUG 14551 / JCM 1027 / KCTC 2358 / NCIMB 9240 / NCTC 8049)).